The sequence spans 189 residues: uncharacterized protein (189 aa).

This sequence to M.jannaschii MJ1461.

This is an uncharacterized protein from Methanocaldococcus jannaschii (strain ATCC 43067 / DSM 2661 / JAL-1 / JCM 10045 / NBRC 100440) (Methanococcus jannaschii).